The chain runs to 82 residues: RNA-binding protein Hfq (82 aa).

Residues 11 to 71 (DTFLNSVRKS…ISTIMPAQPV (61 aa)) enclose the Sm domain.

This sequence belongs to the Hfq family. Homohexamer.

RNA chaperone that binds small regulatory RNA (sRNAs) and mRNAs to facilitate mRNA translational regulation in response to envelope stress, environmental stress and changes in metabolite concentrations. Also binds with high specificity to tRNAs. This Caulobacter sp. (strain K31) protein is RNA-binding protein Hfq.